We begin with the raw amino-acid sequence, 258 residues long: Calcium release-activated calcium channel protein 1 (258 aa).

Over 1-63 (MYPECGVETK…SRAKLKASSR (63 aa)) the chain is Cytoplasmic. A helical membrane pass occupies residues 64-81 (TSALLSGFAMVAMVEVQL). At 82 to 91 (EPNHAYPPGL) the chain is on the extracellular side. The helical transmembrane segment at 92 to 112 (LIAFSACTTVLVAVHLFALMV) threads the bilayer. Residues 113 to 145 (STCILPNIEAVSNVHNLNSVKESPHERMHHHIE) are Cytoplasmic-facing. Residues 146–166 (LAWAFSTVIGTLLFLAEVVLL) traverse the membrane as a helical segment. The Extracellular portion of the chain corresponds to 167 to 192 (CWVKFLPVNSPKISSNETSAVSSGQA). An N-linked (GlcNAc...) asparagine glycan is attached at Asn-182. A helical membrane pass occupies residues 193-213 (AAITSTAIMVPFGLVFIVFAV). At 214 to 258 (HFYRSLVSHKTDRQFQELNELAELAQLQDQLDHRGDPVQSPVHYA) the chain is on the cytoplasmic side.

It belongs to the Orai family.

Its subcellular location is the cell membrane. Its function is as follows. Ca(2+) release-activated Ca(2+) (CRAC) channel subunit which mediates Ca(2+) influx following depletion of intracellular Ca(2+) stores. The chain is Calcium release-activated calcium channel protein 1 (orai1) from Xenopus laevis (African clawed frog).